The chain runs to 204 residues: Guanylate kinase (204 aa).

The Guanylate kinase-like domain maps to 5–184 (GLLIVLSGPS…AVQRIKDIIA (180 aa)). 12-19 (GPSGVGKG) contacts ATP.

This sequence belongs to the guanylate kinase family.

It is found in the cytoplasm. The catalysed reaction is GMP + ATP = GDP + ADP. In terms of biological role, essential for recycling GMP and indirectly, cGMP. The protein is Guanylate kinase of Enterococcus faecalis (strain ATCC 700802 / V583).